A 296-amino-acid chain; its full sequence is Ribose import binding protein RbsB (296 aa).

The first 25 residues, 1 to 25 (MNMKKLATLVSAVALSATVSANAMA), serve as a signal peptide directing secretion.

It belongs to the bacterial solute-binding protein 2 family. The complex is composed of an ATP-binding protein (RbsA), two transmembrane proteins (RbsC) and a solute-binding protein (RbsB).

It localises to the periplasm. Its function is as follows. Part of the ABC transporter complex RbsABC involved in ribose import. Binds ribose. Also serves as the primary chemoreceptor for chemotaxis. The polypeptide is Ribose import binding protein RbsB (Escherichia coli (strain K12)).